The primary structure comprises 266 residues: Type III pantothenate kinase (266 aa).

6 to 13 (DAGNTNIV) is an ATP binding site. 107 to 110 (GADR) is a substrate binding site. Asp-109 functions as the Proton acceptor in the catalytic mechanism. A K(+)-binding site is contributed by Asp-129. Residue Thr-132 participates in ATP binding. Substrate is bound at residue Thr-184.

The protein belongs to the type III pantothenate kinase family. As to quaternary structure, homodimer. NH4(+) serves as cofactor. K(+) is required as a cofactor.

It is found in the cytoplasm. It catalyses the reaction (R)-pantothenate + ATP = (R)-4'-phosphopantothenate + ADP + H(+). It functions in the pathway cofactor biosynthesis; coenzyme A biosynthesis; CoA from (R)-pantothenate: step 1/5. Catalyzes the phosphorylation of pantothenate (Pan), the first step in CoA biosynthesis. The sequence is that of Type III pantothenate kinase from Acidiphilium cryptum (strain JF-5).